Here is a 377-residue protein sequence, read N- to C-terminus: Adaptive-response sensory kinase SasA (377 aa).

The Histidine kinase domain maps to 154 to 373 (MLVHDLRSPL…SFHFTLPVYR (220 aa)). Position 157 is a phosphohistidine; by autocatalysis (His157).

In terms of assembly, homooligomerizes. Interacts with KaiC. Participates in the KaiABC clock complex, whose core is composed of a KaiC homohexamer, 6 KaiB and up to 6 KaiA dimers. SasA and KaiB(fs) compete to bind to KaiC.

The catalysed reaction is ATP + protein L-histidine = ADP + protein N-phospho-L-histidine.. Member of the two-component regulatory system SasA/RpaA involved in genome-wide circadian gene expression. One of several clock output pathways. Participates in the Kai clock protein complex, the main circadian regulator in cyanobacteria, via its interaction with KaiC. KaiC enhances the autophosphorylation activity of SasA, which then transfers its phosphate group to RpaA to activate it. In addition to its output function, recruits fold-shifted KaiB (KaiB(fs)) to KaiC to cooperatively form the KaiB(6):KaiC(6) complex (independent of SasA kinase activity). Required for robustness of the circadian rhythm of gene expression and is involved in clock output, also required for adaptation to light/dark cycles. The protein is Adaptive-response sensory kinase SasA of Synechococcus sp. (strain JA-2-3B'a(2-13)) (Cyanobacteria bacterium Yellowstone B-Prime).